A 317-amino-acid polypeptide reads, in one-letter code: Transaldolase (317 aa).

K126 functions as the Schiff-base intermediate with substrate in the catalytic mechanism.

Belongs to the transaldolase family. Type 1 subfamily. Homodimer.

Its subcellular location is the cytoplasm. It catalyses the reaction D-sedoheptulose 7-phosphate + D-glyceraldehyde 3-phosphate = D-erythrose 4-phosphate + beta-D-fructose 6-phosphate. The protein operates within carbohydrate degradation; pentose phosphate pathway; D-glyceraldehyde 3-phosphate and beta-D-fructose 6-phosphate from D-ribose 5-phosphate and D-xylulose 5-phosphate (non-oxidative stage): step 2/3. Transaldolase is important for the balance of metabolites in the pentose-phosphate pathway. This chain is Transaldolase, found in Paraburkholderia xenovorans (strain LB400).